The sequence spans 303 residues: N-acetyl-D-glucosamine kinase (303 aa).

ATP-binding positions include 4–11 (GFDMGGTK) and 133–140 (GVGGGLIV). Positions 157, 177, 179, and 184 each coordinate Zn(2+).

Belongs to the ROK (NagC/XylR) family. NagK subfamily.

The catalysed reaction is N-acetyl-D-glucosamine + ATP = N-acetyl-D-glucosamine 6-phosphate + ADP + H(+). It participates in cell wall biogenesis; peptidoglycan recycling. In terms of biological role, catalyzes the phosphorylation of N-acetyl-D-glucosamine (GlcNAc) derived from cell-wall degradation, yielding GlcNAc-6-P. This Yersinia enterocolitica serotype O:8 / biotype 1B (strain NCTC 13174 / 8081) protein is N-acetyl-D-glucosamine kinase.